A 640-amino-acid chain; its full sequence is Putative solute carrier organic anion transporter family member 1B7 (640 aa).

Residues 1–16 (MKISTTQIERRFEISS) lie on the Extracellular side of the membrane. A helical transmembrane segment spans residues 17–37 (SLVGLIDGSFEIGNLFVIVFV). Residues 38-49 (SYFGSKLHRPKL) lie on the Cytoplasmic side of the membrane. The helical transmembrane segment at 50-70 (IGIGCFLMGTGSILMALPHFF) threads the bilayer. The Extracellular segment spans residues 71–123 (MGYYRYSKETNIDPSENSTSNLPNCLINQMLSLNRTPSEIIERGCVKESGSHM). The chain crosses the membrane as a helical span at residues 124–144 (WIYVFMGNMLRGIGETPIVPL). Residues 145 to 159 (GISYIDDFAKEGHSS) lie on the Cytoplasmic side of the membrane. The helical transmembrane segment at 160–180 (LYLGTVNVMGMTGLVFAFMLG) threads the bilayer. Residues 181–211 (SLFAKMYVDIGYVDLSTIRITPKDSRWVGAW) lie on the Extracellular side of the membrane. A helical transmembrane segment spans residues 212 to 232 (WLGFLVSGIVSIISSIPFFFL). The Cytoplasmic segment spans residues 233 to 292 (PLNPNKPQKERKVSLFLHVLKTNDKRNQIANLTNRRKYITKNVTGFFQSLKSILTNPLYV). Residue Ser-246 is modified to Phosphoserine. The helical transmembrane segment at 293–313 (IFVIFTLLHMSSYIASLTYII) threads the bilayer. The Extracellular segment spans residues 314–329 (KMVEQQYGWSASKTNF). Residues 330–350 (LLGVLALPAVAIGMFSGGYII) form a helical membrane-spanning segment. Residues 351-362 (KKFKLSLVGLAK) are Cytoplasmic-facing. The chain crosses the membrane as a helical span at residues 363–383 (LAFCSATVHLLSQVLYFFLIC). Topologically, residues 384 to 492 (ESKSVAGLTL…CTRKSYVYFV (109 aa)) are extracellular. The region spanning 406 to 461 (DVPLSYCNSECNCDESQWEPVCGNNGITYLSPCLAGCKSSSGNKEPIVFYNCSCVE) is the Kazal-like domain. 3 cysteine pairs are disulfide-bonded: Cys-412/Cys-442, Cys-418/Cys-438, and Cys-427/Cys-459. Residues 493-513 (IQVLDAFLCAVGLTSYSVLVI) traverse the membrane as a helical segment. The Cytoplasmic portion of the chain corresponds to 514–521 (RIVQPELK). Residues 522–542 (ALAIGFHSMIMRSLGGILVPI) traverse the membrane as a helical segment. At 543–577 (YFGALIDTTCMKWSTNSCGARGACRIYNSTYLGRA) the chain is on the extracellular side. The chain crosses the membrane as a helical span at residues 578-598 (FFGLKVALIFPVLVLLTVFIF). Residues 599–640 (VVRKKSHGKDTKVLENERQVMDEANLEFLNDSEHFVPSAEEQ) lie on the Cytoplasmic side of the membrane. Position 636 is a phosphoserine (Ser-636).

Belongs to the organo anion transporter (TC 2.A.60) family.

The protein resides in the cell membrane. This Homo sapiens (Human) protein is Putative solute carrier organic anion transporter family member 1B7 (SLCO1B7).